Reading from the N-terminus, the 591-residue chain is NADPH oxidase 1 (591 aa).

Over 1–36 (MAGELRGSRGPLQRIQIAPREAPNLHLTMGNWLVNH) the chain is Cytoplasmic. A helical transmembrane segment spans residues 37–59 (WLSVLFLVSWLGLNIFLFVYAFL). The Extracellular portion of the chain corresponds to 60–72 (NYEKSDKYYYTRE). Residues 73-97 (ILGTALALARASALCLNFNSMMILI) traverse the membrane as a helical segment. The region spanning 82 to 316 (RASALCLNFN…YIFERILRFY (235 aa)) is the Ferric oxidoreductase domain. The Cytoplasmic segment spans residues 98–130 (PVCRNLLSFLRGTCSFCNRTLRKPLDHNLTFHK). Heme is bound by residues His129 and His143. The helical transmembrane segment at 131 to 151 (LVAYMICIFTVIHIIAHLFNF) threads the bilayer. The Extracellular segment spans residues 152–195 (ERYRRSQQAMDGSLASVLSSLSHPEKEDSWLNPIQSPNMTVMYA). Residue Asn189 is glycosylated (N-linked (GlcNAc...) asparagine). A helical membrane pass occupies residues 196–216 (AFTSIAGLTGVIATVALVLMV). Over 217–234 (TSAMEFIRRNYFELFWYT) the chain is Cytoplasmic. A helical membrane pass occupies residues 235–255 (HHLFIVYIICLGIHGLGGIVR). Heme is bound by residues His236 and His248. At 256–423 (GQTEESLGES…TVSEDVFQYE (168 aa)) the chain is on the extracellular side. Asn269 is a glycosylation site (N-linked (GlcNAc...) asparagine). Positions 317-418 (RSQQKVVITK…DGPFGTVSED (102 aa)) constitute an FAD-binding FR-type domain. Residue 365 to 371 (HPFTLTS) coordinates FAD. The chain crosses the membrane as a helical span at residues 424-444 (VAVLVGAGIGVTPFASILKSI). The tract at residues 424 to 563 (VAVLVGAGIG…GVFLCGPRTL (140 aa)) is interaction with NOXO1. Residues 445–591 (WYKFQRADNK…VQFYFNKETF (147 aa)) are Cytoplasmic-facing. Thr457 carries the post-translational modification Phosphothreonine.

In terms of assembly, NOX1, NOXA1, NOXO1, RAC1 and CYBA forms a functional multimeric complex supporting ROS production. Interacts with NOXO1. Interacts (via FAD-binding FR-type domain) with ARHGEF7 (via PH domain). Interacts with NOXA1. Requires FAD as cofactor. Post-translationally, phosphorylation at Thr-457 mediated by PKC/PRKBC positively regulates its interaction with NOXA1 and enzyme activity. In terms of tissue distribution, expressed in colon and vascular smooth muscle cells (VSMC).

Its subcellular location is the cell projection. The protein localises to the invadopodium membrane. The protein resides in the cell membrane. The enzyme catalyses NADPH + 2 O2 = 2 superoxide + NADP(+) + H(+). The oxidase activity is potentiated by NOXA1 and NOXO1. Its function is as follows. NADPH oxidase that catalyzes the generation of superoxide from molecular oxygen utilizing NADPH as an electron donor. The polypeptide is NADPH oxidase 1 (Nox1) (Mus musculus (Mouse)).